The chain runs to 203 residues: High frequency lysogenization protein HflD homolog (203 aa).

It belongs to the HflD family.

It is found in the cytoplasm. It localises to the cell inner membrane. The polypeptide is High frequency lysogenization protein HflD homolog (Aeromonas salmonicida (strain A449)).